Reading from the N-terminus, the 444-residue chain is Xylose isomerase (444 aa).

2 residues coordinate Mg(2+): Asp307 and Asp309.

The protein belongs to the xylose isomerase family. In terms of assembly, homotetramer. The cofactor is Mg(2+).

Its subcellular location is the cytoplasm. The enzyme catalyses alpha-D-xylose = alpha-D-xylulofuranose. In Thermotoga neapolitana (strain ATCC 49049 / DSM 4359 / NBRC 107923 / NS-E), this protein is Xylose isomerase.